The primary structure comprises 629 residues: Protein EDS1B (629 aa).

Ser123 (nucleophile) is an active-site residue. Active-site charge relay system residues include Asp187 and His317.

As to quaternary structure, interacts (via N-terminus) with PAD4 and SAG101. Part of a nuclear complex made of EDS1, PAD4 and SAG101, that can be redirected to the cytoplasm in the presence of an extranuclear form of EDS1. Does not interact with itself or with EDS1.

The protein localises to the nucleus. It is found in the cytoplasm. Functionally, acts as a second functional copy of EDS1. Can mediate HRT-mediated resistance to turnip crinkle virus. The sequence is that of Protein EDS1B (EDS1B) from Arabidopsis thaliana (Mouse-ear cress).